Reading from the N-terminus, the 343-residue chain is Endoglucanase C (343 aa).

Glu140 functions as the Proton donor in the catalytic mechanism. The Nucleophile role is filled by Glu280.

This sequence belongs to the glycosyl hydrolase 5 (cellulase A) family.

It carries out the reaction Endohydrolysis of (1-&gt;4)-beta-D-glucosidic linkages in cellulose, lichenin and cereal beta-D-glucans.. It functions in the pathway glycan metabolism; cellulose degradation. Its function is as follows. This enzyme catalyzes the endohydrolysis of 1,4-beta-glucosidic linkages in cellulose, lichenin and cereal beta-D-glucans. This chain is Endoglucanase C (celC), found in Acetivibrio thermocellus (strain ATCC 27405 / DSM 1237 / JCM 9322 / NBRC 103400 / NCIMB 10682 / NRRL B-4536 / VPI 7372) (Clostridium thermocellum).